Consider the following 334-residue polypeptide: Protein-methionine-sulfoxide reductase catalytic subunit MsrP (334 aa).

Positions 1 to 44 (MKKNQFLKESDVTAESVFFMKRRQVLKALGISAAALSLPHAAHA) form a signal peptide, tat-type signal. Residues Asn88, 91–92 (YE), Cys146, Thr181, Asn233, Arg238, and 249–251 (GIK) contribute to the Mo-molybdopterin site.

It belongs to the MsrP family. In terms of assembly, heterodimer of a catalytic subunit (MsrP) and a heme-binding subunit (MsrQ). The cofactor is Mo-molybdopterin. Post-translationally, predicted to be exported by the Tat system. The position of the signal peptide cleavage has not been experimentally proven.

It localises to the periplasm. The enzyme catalyses L-methionyl-[protein] + a quinone + H2O = L-methionyl-(S)-S-oxide-[protein] + a quinol. The catalysed reaction is L-methionyl-[protein] + a quinone + H2O = L-methionyl-(R)-S-oxide-[protein] + a quinol. Its function is as follows. Part of the MsrPQ system that repairs oxidized periplasmic proteins containing methionine sulfoxide residues (Met-O), using respiratory chain electrons. Thus protects these proteins from oxidative-stress damage caused by reactive species of oxygen and chlorine generated by the host defense mechanisms. MsrPQ is essential for the maintenance of envelope integrity under bleach stress, rescuing a wide series of structurally unrelated periplasmic proteins from methionine oxidation, including the primary periplasmic chaperone SurA and the lipoprotein Pal. The catalytic subunit MsrP is non-stereospecific, being able to reduce both (R-) and (S-) diastereoisomers of methionine sulfoxide. This is Protein-methionine-sulfoxide reductase catalytic subunit MsrP from Shigella sonnei (strain Ss046).